The sequence spans 64 residues: Sperm protamine P1 (64 aa).

Residues 1 to 64 form a disordered region; it reads MARYRHSRSR…SRRRRRRYYY (64 aa).

The protein belongs to the protamine P1 family. In terms of tissue distribution, testis.

The protein resides in the nucleus. It is found in the chromosome. Protamines substitute for histones in the chromatin of sperm during the haploid phase of spermatogenesis. They compact sperm DNA into a highly condensed, stable and inactive complex. The chain is Sperm protamine P1 (PRM1) from Hypsiprymnodon moschatus (Musky rat kangaroo).